The primary structure comprises 226 residues: Ribonuclease HII (226 aa).

Residues 29–220 form the RNase H type-2 domain; the sequence is GPVAGVDEAG…VAALLHRVDN (192 aa). A divalent metal cation contacts are provided by aspartate 35, glutamate 36, and aspartate 129.

It belongs to the RNase HII family. It depends on Mn(2+) as a cofactor. Requires Mg(2+) as cofactor.

It is found in the cytoplasm. It carries out the reaction Endonucleolytic cleavage to 5'-phosphomonoester.. Its function is as follows. Endonuclease that specifically degrades the RNA of RNA-DNA hybrids. The chain is Ribonuclease HII from Rhodococcus opacus (strain B4).